Here is a 2226-residue protein sequence, read N- to C-terminus: Histone-lysine N-methyltransferase ash1 (2226 aa).

The disordered stretch occupies residues 1-145 (MSCSQNETAA…SDSEDDLPLK (145 aa)). Polar residues predominate over residues 32–52 (ITDQSSQSKSIKSATQFSVQR). Positions 99–111 (AVSKKVKVKRKKL) are enriched in basic residues. Phosphoserine occurs at positions 135, 136, and 138. Residues Thr200 and Thr201 each carry the phosphothreonine modification. The segment covering 260–269 (PRKRRGRPKK) has biased composition (basic residues). 5 disordered regions span residues 260-324 (PRKR…IASS), 343-367 (RVLY…SSNK), 673-695 (AQQL…KRGL), 711-749 (SASA…HKLP), and 811-832 (KRHL…SNSP). Residues 261–273 (RKRRGRPKKVVPT) constitute a DNA-binding region (a.T hook 1). The span at 294–306 (STTSTTQSTTPSP) shows a compositional bias: low complexity. Polar residues predominate over residues 307–324 (KMQNENAVPTGSLPIASS). Low complexity predominate over residues 711–727 (SASASGTPNGSGSSNGN). Phosphoserine occurs at positions 740, 831, and 977. Residues 820 to 831 (SVSGAGSSASNS) are compositionally biased toward low complexity. 2 disordered regions span residues 980–1026 (QQTT…DCER) and 1049–1230 (SVVA…TTSL). Over residues 989-999 (HEPEFDPDDEP) the composition is skewed to acidic residues. DNA-binding regions (a.T hook) lie at residues 1065-1077 (GRPR…NREQ) and 1095-1107 (AKKR…QPVL). Residues 1108 to 1117 (EEPPPTPPPQ) show a composition bias toward pro residues. The segment covering 1186–1200 (AEAKRLDSIPTEHDP) has biased composition (basic and acidic residues). Residues 1205 to 1219 (ESHNPGPQDYASCSE) show a composition bias toward polar residues. Positions 1339–1387 (FDHPTCNCKNQGEKSCLDNCLNRMVYTECSPSNCPAGEKCRNQKIQRHA) constitute an AWS domain. Residues 1390–1506 (PGVERFMTAD…EGEELTYDYN (117 aa)) form the SET domain. In terms of domain architecture, Post-SET spans 1514 to 1530 (EGQPCRCNTPQCRGVIG). Disordered regions lie at residues 1536 to 1575 (VKPL…GKDI) and 1616 to 1648 (RASD…SSPS). The span at 1556-1568 (GRQRKQKAKKHAQ) shows a compositional bias: basic residues. Low complexity-rich tracts occupy residues 1619–1628 (DAAATASSPA) and 1639–1648 (RRPSTPSSPS). Residues 1681 to 1789 (KMAVVLRDIC…DSYEQQKIAS (109 aa)) form the Bromo domain. The tract at residues 1808–1839 (PKEVLSSEEEPGKIAVKKSPGAKERDSPIVPL) is disordered. The PHD-type zinc-finger motif lies at 1857–1903 (VIRCICGLYKDEGLMIQCSKCMVWQHTECTKADIDADNYQCERCEPR). A BAH domain is found at 1952–2072 (KVLPTKKHTY…KTARFFSKAK (121 aa)). Residues 2205-2226 (SGRGARQRKTQQSSSSSTANST) are disordered. Over residues 2214–2226 (TQQSSSSSTANST) the composition is skewed to low complexity.

This sequence belongs to the class V-like SAM-binding methyltransferase superfamily. Histone-lysine methyltransferase family. SET2 subfamily. Component of a large multiprotein complex distinct from complexes containing ash2 or brm. Interacts (via SET domain) with trx (via SET domain). Interacts with nej/cbp. As to expression, expressed throughout development but is present at higher levels during the embryonic and pupal stages than during the larval stages. During the larval stages it accumulates primarily in imaginal disks.

The protein resides in the nucleus. Its subcellular location is the chromosome. It carries out the reaction L-lysyl(4)-[histone H3] + 3 S-adenosyl-L-methionine = N(6),N(6),N(6)-trimethyl-L-lysyl(4)-[histone H3] + 3 S-adenosyl-L-homocysteine + 3 H(+). Its function is as follows. Trithorax group (TrxG) protein that has histone methyltransferase activity. Specifically trimethylates 'Lys-4' of histone H3 (H3K4me3), a specific tag for epigenetic transcriptional activation. TrxG proteins are generally required to maintain the transcriptionally active state of homeotic genes throughout development. Does not act as a coactivator required for transcriptional activation, but specifically prevents inappropriate Polycomb Group (PcG) silencing of homeotic genes in cells in which they must stay transcriptionally active. The sequence is that of Histone-lysine N-methyltransferase ash1 (ash1) from Drosophila melanogaster (Fruit fly).